We begin with the raw amino-acid sequence, 636 residues long: Polyadenylate-binding protein 1 (636 aa).

At Met1 the chain carries N-acetylmethionine. RRM domains are found at residues 11 to 89 (ASLY…WSQR), 99 to 175 (GNIF…RFKS), 191 to 268 (TNVY…RAQK), and 294 to 370 (VNLY…LAQR). The interval 166 to 289 (RKVFVGRFKS…FEQMKQDRIT (124 aa)) is CSDE1-binding. Lys299 bears the N6-methyllysine mark. Position 315 is a phosphoserine (Ser315). Thr319 carries the phosphothreonine modification. Omega-N-methylarginine is present on residues Arg385, Arg419, Arg432, and Arg436. Residues Arg455 and Arg460 each carry the omega-N-methylated arginine; by CARM1 modification. Arg475 and Arg481 each carry omega-N-methylarginine. Arg493 carries the post-translational modification Asymmetric dimethylarginine; alternate. Arg493 is modified (dimethylated arginine; alternate). Arg493 carries the post-translational modification Omega-N-methylarginine; alternate. Arg506 is subject to Omega-N-methylarginine. At Lys512 the chain carries N6-acetyllysine. An Omega-N-methylarginine modification is found at Arg518. The 78-residue stretch at 542–619 (QEPLTASMLA…AVAVLQAHQA (78 aa)) folds into the PABC domain.

It belongs to the polyadenylate-binding protein type-1 family. May form homodimers. Component of a multisubunit autoregulatory ribonucleoprotein complex (ARC), at least composed of IGF2BP1, PABPC1 and CSDE1. Directly interacts with IGF2BP1. Part of a complex associated with the FOS mCRD domain and consisting of HNRPD, SYNCRIP, PAIP1 and CSDE1/UNR. Interacts with PAIP1 and PAIP2 (via the PABPC1-interacting motifs PAM1 and PAM2). Interacts with PAIP1 with a 1:1 stoichiometry and with PAIP2 with a 1:2 stoichiometry. The interaction with CSDE1 is direct and RNA-independent. Found in a mRNP complex with YBX2. Interacts with TENT2/GLD2. Identified in the spliceosome C complex. Identified in a mRNP complex, at least composed of DHX9, DDX3X, ELAVL1, HNRNPU, IGF2BP1, ILF3, PABPC1, PCBP2, PTBP2, STAU1, STAU2, SYNCRIP and YBX1. The interaction with DDX3X is direct and RNA-independent. This interaction increases in stressed cells and decreases during cell recovery. Identified in a IGF2BP1-dependent mRNP granule complex containing untranslated mRNAs. Interacts with NXF1/TAP. Interacts with PIWIL1. Interacts with AGO1, AGO2, GSPT1 and GSPT2. Interacts with LARP4B. Interacts (via the second and third RRM domains and the C-terminus) with PAIP2B (via central acidic portion and C-terminus). Forms a complex with LARP1 and SHFL. Interacts with LARP4. Interacts with ZFC3H1 in a RNase-sensitive manner. Interacts with TRIM71 (via NHL repeats) in an RNA-dependent manner. Interacts with TENT5C; the interaction has no effect on TENT5C poly(A) polymerase function. Interacts with G3BP1 and G3BP2. Interacts with ENDOV; the interaction is RNA-dependent and stimulates ENDOV activity. Interacts with UPF1; the interaction is RNA-dependent. Interacts with IGF2BP2 and IGF2BP3. May interact with SETX. Interacts with RBM46. Interacts with PAN3. Phosphorylated by MAPKAPK2. Post-translationally, methylated by CARM1. Arg-493 is dimethylated, probably to asymmetric dimethylarginine.

The protein resides in the cytoplasm. It is found in the stress granule. Its subcellular location is the nucleus. It localises to the cell projection. The protein localises to the lamellipodium. Binds the poly(A) tail of mRNA, including that of its own transcript, and regulates processes of mRNA metabolism such as pre-mRNA splicing and mRNA stability. Its function in translational initiation regulation can either be enhanced by PAIP1 or repressed by PAIP2. Can probably bind to cytoplasmic RNA sequences other than poly(A) in vivo. Binds to N6-methyladenosine (m6A)-containing mRNAs and contributes to MYC stability by binding to m6A-containing MYC mRNAs. Involved in translationally coupled mRNA turnover. Implicated with other RNA-binding proteins in the cytoplasmic deadenylation/translational and decay interplay of the FOS mRNA mediated by the major coding-region determinant of instability (mCRD) domain. Involved in regulation of nonsense-mediated decay (NMD) of mRNAs containing premature stop codons; for the recognition of premature termination codons (PTC) and initiation of NMD a competitive interaction between UPF1 and PABPC1 with the ribosome-bound release factors is proposed. By binding to long poly(A) tails, may protect them from uridylation by ZCCHC6/ZCCHC11 and hence contribute to mRNA stability. The sequence is that of Polyadenylate-binding protein 1 (PABPC1) from Bos taurus (Bovine).